A 391-amino-acid chain; its full sequence is PPE family protein PPE18 (391 aa).

This sequence belongs to the mycobacterial PPE family. Interacts with human TLR2.

Its subcellular location is the secreted. It localises to the cell wall. The protein localises to the cell surface. In terms of biological role, could be a crucial virulence factor for intracellular survival of M.tuberculosis. Favors development of Th2-type response, and down-regulates the pro-inflammatory and Th1-type response. Specifically interacts with the human Toll-like receptor 2 (TLR2), leading to an early and sustained activation of p38 MAPK, which induces IL-10 production and activates Th2-type immune response. Also inhibits pro-inflammatory cytokines IL-12p40 and TNF-alpha production. Acts by up-regulating the expression as well as tyrosine phosphorylation of suppressor of cytokine signaling 3 (SOCS-3), leading to the inhibition of phosphorylation of I-kappa-B-alpha, thereby preventing nuclear translocation of the NF-kappa-B/REL subunits and expression of NF-kappa-B regulated genes like IL-12 and TNF-alpha. Induction of SOCS-3 probably depends on the activation of p38 MAPK. In Mycobacterium tuberculosis (strain ATCC 25618 / H37Rv), this protein is PPE family protein PPE18.